The sequence spans 1466 residues: ABC transporter G family member 10 (1466 aa).

The segment covering 23 to 45 (NTPQYENNNNNNNNTSGNESPNI) has biased composition (low complexity). Positions 23–47 (NTPQYENNNNNNNNTSGNESPNILN) are disordered. Residues 138–392 (VTIFNLFRPS…FLDLGFDCEP (255 aa)) form the ABC transporter 1 domain. The region spanning 497-724 (WGDRFALISK…NGSTMSYQDQ (228 aa)) is the ABC transmembrane type-2 1 domain. The next 6 helical transmembrane spans lie at 501 to 521 (FALI…ASLF), 537 to 557 (AIYA…GLTF), 586 to 606 (IPLT…MYGL), 611 to 631 (GKFF…VAFF), 641 to 661 (LYVS…YGGY), and 767 to 787 (IITF…LELF). The 245-residue stretch at 838 to 1082 (FTWNHIHYTV…LTSYFERNGV (245 aa)) folds into the ABC transporter 2 domain. Residue 874-881 (GSSGAGKT) participates in ATP binding. The ABC transmembrane type-2 2 domain occupies 1177-1399 (SYVYGIFTQA…LTCKEYFKPT (223 aa)). The next 6 membrane-spanning stretches (helical) occupy residues 1178-1198 (YVYG…FTFW), 1214-1234 (IFEI…QFLI), 1253-1273 (FAIS…TICF), 1290-1310 (FYFY…GQVV), 1319-1339 (LAQT…GVLV), and 1440-1460 (YGIL…FVYL).

It belongs to the ABC transporter superfamily. ABCG family. PDR (TC 3.A.1.205) subfamily.

It is found in the membrane. This is ABC transporter G family member 10 (abcG10) from Dictyostelium discoideum (Social amoeba).